The chain runs to 598 residues: Arginine--tRNA ligase (598 aa).

Positions 135–145 match the 'HIGH' region motif; it reads ANPTGPIHIGG. The disordered stretch occupies residues 229-248; that stretch reads VDGGTDEKGEPLGEGDSEQR. Positions 231 to 248 are enriched in basic and acidic residues; it reads GGTDEKGEPLGEGDSEQR.

This sequence belongs to the class-I aminoacyl-tRNA synthetase family. In terms of assembly, monomer.

It localises to the cytoplasm. It catalyses the reaction tRNA(Arg) + L-arginine + ATP = L-arginyl-tRNA(Arg) + AMP + diphosphate. The sequence is that of Arginine--tRNA ligase from Bifidobacterium animalis subsp. lactis (strain AD011).